Here is a 156-residue protein sequence, read N- to C-terminus: Low molecular weight phosphotyrosine protein phosphatase (156 aa).

Cys11 functions as the Nucleophile in the catalytic mechanism. The active site involves Arg17. Catalysis depends on Asp128, which acts as the Proton donor.

Belongs to the low molecular weight phosphotyrosine protein phosphatase family.

Its subcellular location is the cytoplasm. The catalysed reaction is O-phospho-L-tyrosyl-[protein] + H2O = L-tyrosyl-[protein] + phosphate. It carries out the reaction a phosphate monoester + H2O = an alcohol + phosphate. In terms of biological role, may contribute to dephosphorylation of 'Tyr-15' of cdc2. The polypeptide is Low molecular weight phosphotyrosine protein phosphatase (stp1) (Schizosaccharomyces pombe (strain 972 / ATCC 24843) (Fission yeast)).